The sequence spans 555 residues: Glycerol dehydratase large subunit (555 aa).

It belongs to the diol/glycerol dehydratase large subunit family. In terms of assembly, probably consists of three subunits: large, medium, and small. It depends on adenosylcob(III)alamin as a cofactor.

The catalysed reaction is glycerol = 3-hydroxypropanal + H2O. This is Glycerol dehydratase large subunit (dhaB) from Citrobacter freundii.